The chain runs to 330 residues: DNA-directed RNA polymerase subunit alpha (330 aa).

Residues Met1 to Lys237 form an alpha N-terminal domain (alpha-NTD) region. Residues Phe251–Glu330 are alpha C-terminal domain (alpha-CTD).

Belongs to the RNA polymerase alpha chain family. Homodimer. The RNAP catalytic core consists of 2 alpha, 1 beta, 1 beta' and 1 omega subunit. When a sigma factor is associated with the core the holoenzyme is formed, which can initiate transcription.

It catalyses the reaction RNA(n) + a ribonucleoside 5'-triphosphate = RNA(n+1) + diphosphate. In terms of biological role, DNA-dependent RNA polymerase catalyzes the transcription of DNA into RNA using the four ribonucleoside triphosphates as substrates. The protein is DNA-directed RNA polymerase subunit alpha of Legionella pneumophila subsp. pneumophila (strain Philadelphia 1 / ATCC 33152 / DSM 7513).